Reading from the N-terminus, the 135-residue chain is Large ribosomal subunit protein uL16c (135 aa).

A compositionally biased stretch (basic residues) spans 1 to 23; sequence MLSPKKTKFRKEHRGRMKGRSSR. The interval 1-24 is disordered; it reads MLSPKKTKFRKEHRGRMKGRSSRG.

This sequence belongs to the universal ribosomal protein uL16 family. In terms of assembly, part of the 50S ribosomal subunit.

The protein resides in the plastid. Its subcellular location is the chloroplast. The chain is Large ribosomal subunit protein uL16c from Pelargonium hortorum (Common geranium).